The chain runs to 31 residues: MEAIVYTFLLVGTLGIIFFAIFFREPPRIAK.

The chain crosses the membrane as a helical span at residues 3–23; the sequence is AIVYTFLLVGTLGIIFFAIFF.

Belongs to the PsbT family. As to quaternary structure, PSII is composed of 1 copy each of membrane proteins PsbA, PsbB, PsbC, PsbD, PsbE, PsbF, PsbH, PsbI, PsbJ, PsbK, PsbL, PsbM, PsbT, PsbY, PsbZ, Psb30/Ycf12, at least 3 peripheral proteins of the oxygen-evolving complex and a large number of cofactors. It forms dimeric complexes.

It is found in the plastid. The protein localises to the chloroplast thylakoid membrane. In terms of biological role, found at the monomer-monomer interface of the photosystem II (PS II) dimer, plays a role in assembly and dimerization of PSII. PSII is a light-driven water plastoquinone oxidoreductase, using light energy to abstract electrons from H(2)O, generating a proton gradient subsequently used for ATP formation. In Ostreococcus tauri, this protein is Photosystem II reaction center protein T.